Here is a 101-residue protein sequence, read N- to C-terminus: UPF0473 protein MGAS10750_Spy1887 (101 aa).

This sequence belongs to the UPF0473 family.

The polypeptide is UPF0473 protein MGAS10750_Spy1887 (Streptococcus pyogenes serotype M4 (strain MGAS10750)).